Consider the following 521-residue polypeptide: Cytochrome b5 reductase 4 (521 aa).

Position 1 is an N-acetylmethionine (Met1). Over residues 1–18 (MLNVPSQSFPAPRSQQRV) the composition is skewed to polar residues. Residues 1 to 27 (MLNVPSQSFPAPRSQQRVASGGRSKVP) are disordered. Residues 54-130 (LIEVTEEELK…LKECLVGRMA (77 aa)) enclose the Cytochrome b5 heme-binding domain. The heme site is built by His89 and His112. In terms of domain architecture, CS spans 165-256 (PSYPSYDWFQ…KENTSWDFLG (92 aa)). Residues 273–385 (LYYRKCQLIS…SSPEGNFKIS (113 aa)) enclose the FAD-binding FR-type domain. FAD is bound by residues 365–380 (DRLQIGDFVSVSSPEG) and 392–424 (DLFLLAAGTGFTPMVKILNYALTDIPSLRKVKL).

It belongs to the flavoprotein pyridine nucleotide cytochrome reductase family. FAD is required as a cofactor. In terms of tissue distribution, widely expressed.

It is found in the endoplasmic reticulum. The catalysed reaction is 2 Fe(III)-[cytochrome b5] + NADH = 2 Fe(II)-[cytochrome b5] + NAD(+) + H(+). Functionally, NADH-cytochrome b5 reductase involved in endoplasmic reticulum stress response pathway. Plays a critical role in protecting pancreatic beta-cells against oxidant stress, possibly by protecting the cell from excess buildup of reactive oxygen species (ROS). Reduces a variety of substrates in vitro, such as cytochrome c, feericyanide and methemoglobin. In Homo sapiens (Human), this protein is Cytochrome b5 reductase 4.